The sequence spans 1547 residues: Mediator of RNA polymerase II transcription subunit 12 (1547 aa).

Disordered stretches follow at residues M1–I63 and P1356–D1509. Residues V1357–P1369 show a composition bias toward pro residues. The segment covering Y1379–A1390 has biased composition (polar residues). 2 stretches are compositionally biased toward low complexity: residues Q1398–Q1413 and L1446–Q1468. Composition is skewed to polar residues over residues P1469–V1480 and A1499–D1509.

It belongs to the Mediator complex subunit 12 family. In terms of assembly, component of the SRB8-11 complex, which itself associates with the Mediator complex.

It is found in the nucleus. Component of the SRB8-11 complex. The SRB8-11 complex is a regulatory module of the Mediator complex which is itself involved in regulation of basal and activated RNA polymerase II-dependent transcription. The SRB8-11 complex may be involved in the transcriptional repression of a subset of genes regulated by Mediator. It may inhibit the association of the Mediator complex with RNA polymerase II to form the holoenzyme complex. In Phaeosphaeria nodorum (strain SN15 / ATCC MYA-4574 / FGSC 10173) (Glume blotch fungus), this protein is Mediator of RNA polymerase II transcription subunit 12 (SRB8).